The primary structure comprises 507 residues: F-box only protein 31 (507 aa).

Positions 19-42 (RQQRRGPAETAAADSEADTDPEEE) are disordered. The residue at position 33 (Ser-33) is a Phosphoserine. Positions 33–42 (SEADTDPEEE) are enriched in acidic residues. Thr-37 is modified (phosphothreonine). The short motif at 50 to 55 (RCSLLE) is the D box element. Positions 50–96 (RCSLLELPPELLVEIFASLPGTDLPSLAQVCSRFRRILHTDTIWRRR) constitute an F-box domain. Zn(2+) contacts are provided by Cys-192, His-200, Cys-216, and His-222. Ser-264 bears the Phosphoserine; by ATM mark. The short motif at 283-285 (DDL) is the DDL motif element. The disordered stretch occupies residues 366–417 (EQEAGEGAAPPREPSAKAADGPPAKDGKEPGGGAEAAEQSASSGQGQPFVLP). Over residues 400-412 (EAAEQSASSGQGQ) the composition is skewed to low complexity. Phosphoserine is present on Ser-448.

This sequence belongs to the FBXO31 family. In terms of assembly, part of a SCF (SKP1-cullin-F-box) protein ligase complex SCF(FBXO31) composed of CUL1, SKP1, RBX1 and FBXO31. Interacts (when phosphorylated at Ser-33) with CDC20, promoting ubiquitination by the APC/C complex. Phosphorylation at Ser-264 by ATM following gamma-irradiation results in its stabilization. Phosphorylation at Ser-448 in absence of stress promotes its ubiquitination and degradation by the SCF(FBXO46) complex. Phosphorylation at Ser-33 by AKT1 promotes association with CDC20 and ubiquitination by the APC/C complex. Post-translationally, ubiquitinated by the SCF(FBXO46) complex in absence of stress, promoting its degradation. Ubiquitinated by the APC/C complex following phosphorylation at Ser-33, leading to its degradation by the proteasome.

Its subcellular location is the cytoplasm. It localises to the cytoskeleton. The protein resides in the microtubule organizing center. It is found in the centrosome. It participates in protein modification; protein ubiquitination. Its function is as follows. Substrate-recognition component of the SCF(FBXO31) protein ligase complex, which specifically mediates the ubiquitination of proteins amidated at their C-terminus in response to oxidative stress, leading to their degradation by the proteasome. FBXO31 specifically recognizes and binds C-terminal peptides bearing an amide: C-terminal amidation in response to oxidative stress takes place following protein fragmentation. The SCF(FBXO31) also plays a role in G1 arrest following DNA damage by mediating ubiquitination of phosphorylated cyclin-D1 (CCND1), promoting its degradation by the proteasome, resulting in G1 arrest. The SCF(FBXO31) complex is however not a major regulator of CCND1 stability during the G1/S transition. In response to genotoxic stress, the SCF(FBXO31) complex directs ubiquitination and degradation of phosphorylated MDM2, thereby promoting p53/TP53-mediated DNA damage response. SCF(FBXO31) complex is required for genomic integrity by catalyzing ubiquitination and degradation of cyclin-A (CCNA1 and/or CCNA2) during the G1 phase. In response to genotoxic stress, the SCF(FBXO31) complex directs ubiquitination and degradation of phosphorylated FBXO46 and MAP2K6. SCF(FBXO31) complex promotes ubiquitination and degradation of CDT1 during the G2 phase to prevent re-replication. The SCF(FBXO31) complex also mediates ubiquitination and degradation of DUSP6, OGT and PARD6A. The sequence is that of F-box only protein 31 from Mus musculus (Mouse).